Here is a 506-residue protein sequence, read N- to C-terminus: Maturase K (506 aa).

It belongs to the intron maturase 2 family. MatK subfamily.

The protein localises to the plastid. The protein resides in the chloroplast. Its function is as follows. Usually encoded in the trnK tRNA gene intron. Probably assists in splicing its own and other chloroplast group II introns. The chain is Maturase K from Trifolium resupinatum (Persian clover).